A 684-amino-acid polypeptide reads, in one-letter code: 77 kDa membrane protein (684 aa).

The N-terminal stretch at 1 to 30 (MKFKSLITTTLALGVLASTGANFNNNEASA) is a signal peptide. 6 MAP repeats span residues 45 to 154 (GYSK…EDKK), 156 to 265 (DKAN…ENKA), 266 to 374 (KRNY…KADR), 375 to 474 (YVPY…TGTK), 475 to 584 (AKAD…KKNN), and 586 to 684 (SNNV…ELKF).

It is found in the cell membrane. In terms of biological role, binds various plasma and ECM-proteins. In Staphylococcus aureus (strain COL), this protein is 77 kDa membrane protein.